Reading from the N-terminus, the 305-residue chain is Mitochondrial uncoupling protein 2 (305 aa).

Solcar repeat units lie at residues 10 to 104, 114 to 205, and 214 to 297; these read ISFL…VKTL, IPLY…IKET, and DSVL…VKKV. 6 consecutive transmembrane segments (helical) span residues 16 to 36, 73 to 93, 120 to 140, 179 to 199, 220 to 240, and 270 to 290; these read FICS…LDTA, ISGL…YGGL, ILAA…TDLV, TGLG…LASY, LLAG…IDVV, and YKGF…MFLT.

This sequence belongs to the mitochondrial carrier (TC 2.A.29) family.

The protein resides in the mitochondrion inner membrane. Functionally, PUMPS are mitochondrial transporter proteins that create proton leaks across the inner mitochondrial membrane, thus uncoupling oxidative phosphorylation. This leads to a decrease in the efficiency of oxidative phosphorylation and an increase in heat production. May be involved in protecting plant cells against oxidative stress damage. This is Mitochondrial uncoupling protein 2 (PUMP2) from Arabidopsis thaliana (Mouse-ear cress).